Here is a 659-residue protein sequence, read N- to C-terminus: Tail sheath protein (659 aa).

This sequence belongs to the myoviridae tail sheath protein family. As to quaternary structure, hexamer.

It localises to the virion. In terms of biological role, structural component of the bacteriophage tail which consists of a contractile sheath, a tube and a baseplate. The central cylindrical segment of the tail consists of a rigid tube, composed of multiple copies of gp19, surrounded by the outer contractile sheath assembled from gp18 subunits. A total of 138 copies of gp18 arranged into 23 hexameric rings constitutes the sheath. During infection, contraction of the sheath drives the central tube through the host outer membrane, creating a channel for DNA ejection from the capsid into the host cell. This Escherichia coli (Bacteriophage T4) protein is Tail sheath protein (18).